Consider the following 102-residue polypeptide: Small ribosomal subunit protein uS10 (102 aa).

Belongs to the universal ribosomal protein uS10 family. As to quaternary structure, part of the 30S ribosomal subunit.

Functionally, involved in the binding of tRNA to the ribosomes. The polypeptide is Small ribosomal subunit protein uS10 (Chelativorans sp. (strain BNC1)).